The sequence spans 266 residues: Glucosamine-6-phosphate deaminase (266 aa).

Residue Asp72 is the Proton acceptor; for enolization step of the active site. Asp141 functions as the For ring-opening step in the catalytic mechanism. His143 (proton acceptor; for ring-opening step) is an active-site residue. Glu148 functions as the For ring-opening step in the catalytic mechanism.

It belongs to the glucosamine/galactosamine-6-phosphate isomerase family. NagB subfamily. As to quaternary structure, homohexamer.

The enzyme catalyses alpha-D-glucosamine 6-phosphate + H2O = beta-D-fructose 6-phosphate + NH4(+). It functions in the pathway amino-sugar metabolism; N-acetylneuraminate degradation; D-fructose 6-phosphate from N-acetylneuraminate: step 5/5. Allosterically activated by N-acetylglucosamine 6-phosphate (GlcNAc6P). In terms of biological role, catalyzes the reversible isomerization-deamination of glucosamine 6-phosphate (GlcN6P) to form fructose 6-phosphate (Fru6P) and ammonium ion. The polypeptide is Glucosamine-6-phosphate deaminase (Klebsiella pneumoniae subsp. pneumoniae (strain ATCC 700721 / MGH 78578)).